We begin with the raw amino-acid sequence, 696 residues long: UvrABC system protein C (696 aa).

Residues 16–95 (TEPGVYKFRD…IKRFDPRFNV (80 aa)) form the GIY-YIG domain. The UVR domain maps to 208–243 (DKVTRKLNADMMAAAEELDFERAARLRDDLEAIDKV).

This sequence belongs to the UvrC family. As to quaternary structure, interacts with UvrB in an incision complex.

The protein localises to the cytoplasm. Functionally, the UvrABC repair system catalyzes the recognition and processing of DNA lesions. UvrC both incises the 5' and 3' sides of the lesion. The N-terminal half is responsible for the 3' incision and the C-terminal half is responsible for the 5' incision. This Corynebacterium glutamicum (strain R) protein is UvrABC system protein C.